A 214-amino-acid polypeptide reads, in one-letter code: UPF0056 membrane protein aq_540 (214 aa).

Transmembrane regions (helical) follow at residues 17-37 (FLSL…ISLM), 47-67 (VIAL…LISG), 73-93 (FMGI…FLIA), 122-142 (LIPL…VLVL), 153-173 (VALF…YSLS), and 185-205 (INLI…QFVV).

This sequence belongs to the UPF0056 (MarC) family.

It is found in the cell membrane. This chain is UPF0056 membrane protein aq_540, found in Aquifex aeolicus (strain VF5).